We begin with the raw amino-acid sequence, 228 residues long: Octanoyltransferase (228 aa).

The region spanning 31 to 212 (EETDGILILL…KFEEVFEIKF (182 aa)) is the BPL/LPL catalytic domain. Residues 76-83 (RGGKITFH), 143-145 (AIG), and 156-158 (GIA) contribute to the substrate site. Cys-174 functions as the Acyl-thioester intermediate in the catalytic mechanism.

It belongs to the LipB family.

The protein localises to the cytoplasm. The enzyme catalyses octanoyl-[ACP] + L-lysyl-[protein] = N(6)-octanoyl-L-lysyl-[protein] + holo-[ACP] + H(+). Its pathway is protein modification; protein lipoylation via endogenous pathway; protein N(6)-(lipoyl)lysine from octanoyl-[acyl-carrier-protein]: step 1/2. In terms of biological role, catalyzes the transfer of endogenously produced octanoic acid from octanoyl-acyl-carrier-protein onto the lipoyl domains of lipoate-dependent enzymes. Lipoyl-ACP can also act as a substrate although octanoyl-ACP is likely to be the physiological substrate. This is Octanoyltransferase from Caldanaerobacter subterraneus subsp. tengcongensis (strain DSM 15242 / JCM 11007 / NBRC 100824 / MB4) (Thermoanaerobacter tengcongensis).